The following is a 179-amino-acid chain: Large ribosomal subunit protein uL5 (179 aa).

Belongs to the universal ribosomal protein uL5 family. Part of the 50S ribosomal subunit; part of the 5S rRNA/L5/L18/L25 subcomplex. Contacts the 5S rRNA and the P site tRNA. Forms a bridge to the 30S subunit in the 70S ribosome.

Functionally, this is one of the proteins that bind and probably mediate the attachment of the 5S RNA into the large ribosomal subunit, where it forms part of the central protuberance. In the 70S ribosome it contacts protein S13 of the 30S subunit (bridge B1b), connecting the 2 subunits; this bridge is implicated in subunit movement. Contacts the P site tRNA; the 5S rRNA and some of its associated proteins might help stabilize positioning of ribosome-bound tRNAs. This chain is Large ribosomal subunit protein uL5, found in Pseudomonas fluorescens (strain ATCC BAA-477 / NRRL B-23932 / Pf-5).